A 683-amino-acid polypeptide reads, in one-letter code: Acetyl-coenzyme A synthetase 2 (683 aa).

CoA is bound by residues 207–210 (RGGK) and threonine 326. ATP-binding positions include 402 to 404 (GEP), 426 to 431 (DTFWQT), aspartate 517, and arginine 532. Serine 540 serves as a coordination point for CoA. ATP is bound at residue arginine 543. Arginine 613 contacts CoA.

The protein belongs to the ATP-dependent AMP-binding enzyme family.

The catalysed reaction is acetate + ATP + CoA = acetyl-CoA + AMP + diphosphate. The protein is Acetyl-coenzyme A synthetase 2 (ACS2) of Candida glabrata (strain ATCC 2001 / BCRC 20586 / JCM 3761 / NBRC 0622 / NRRL Y-65 / CBS 138) (Yeast).